The primary structure comprises 597 residues: Protein Spindly (597 aa).

M1 is modified (N-acetylmethionine). Residues 1-445 (MEADITNLRN…LKLKYEPEER (445 aa)) adopt a coiled-coil conformation. 2 positions are modified to phosphoserine: S508 and S547. The interval 531 to 597 (PASTEVLHEQ…STPEMQCPQQ (67 aa)) is disordered. Polar residues predominate over residues 540–549 (QSGNTPSSPR). Positions 550–574 (LTEESRLPTKVKERKEATSKLEKGA) are enriched in basic and acidic residues. Over residues 583–597 (YVSSKSTPEMQCPQQ) the composition is skewed to polar residues.

Belongs to the Spindly family. As to quaternary structure, interacts with KNTC1 and ZW10. These interactions appear weak and may be transient or indirect. Interacts with dynein intermediate chain and dynactin (DCTN1). Interacts with the catalytically active form of USP45. Monoubiquitinated with'Lys-48' linkage. Deubiquitinated by USP45.

Its subcellular location is the cytoplasm. It is found in the cytoskeleton. The protein localises to the microtubule organizing center. The protein resides in the centrosome. It localises to the chromosome. Its subcellular location is the centromere. It is found in the kinetochore. The protein localises to the nucleus. The protein resides in the spindle pole. Its function is as follows. Required for the localization of dynein and dynactin to the mitotic kintochore. Dynein is believed to control the initial lateral interaction between the kinetochore and spindle microtubules and to facilitate the subsequent formation of end-on kinetochore-microtubule attachments mediated by the NDC80 complex. Also required for correct spindle orientation. Does not appear to be required for the removal of spindle assembly checkpoint (SAC) proteins from the kinetochore upon bipolar spindle attachment. Acts as an adapter protein linking the dynein motor complex to various cargos and converts dynein from a non-processive to a highly processive motor in the presence of dynactin. Facilitates the interaction between dynein and dynactin and activates dynein processivity (the ability to move along a microtubule for a long distance without falling off the track). Plays a role in cell migration. The sequence is that of Protein Spindly (Spdl1) from Rattus norvegicus (Rat).